We begin with the raw amino-acid sequence, 256 residues long: Ribonuclease 3 (256 aa).

An RNase III domain is found at 3–125; the sequence is LDALQQRLGY…IVGAVFLDAG (123 aa). Glu-38 contacts Mg(2+). Asp-42 is a catalytic residue. Mg(2+) contacts are provided by Asp-111 and Glu-114. Glu-114 is a catalytic residue. The DRBM domain occupies 152 to 222; it reads DAKTLLQEYL…AKLALDEVQK (71 aa). Positions 229–256 are disordered; that stretch reads KRSRAERTGKTRKQPQPQDPQLSLRLKE.

The protein belongs to the ribonuclease III family. As to quaternary structure, homodimer. The cofactor is Mg(2+).

It localises to the cytoplasm. The enzyme catalyses Endonucleolytic cleavage to 5'-phosphomonoester.. Its function is as follows. Digests double-stranded RNA. Involved in the processing of primary rRNA transcript to yield the immediate precursors to the large and small rRNAs (23S and 16S). Processes some mRNAs, and tRNAs when they are encoded in the rRNA operon. Processes pre-crRNA and tracrRNA of type II CRISPR loci if present in the organism. In Cupriavidus taiwanensis (strain DSM 17343 / BCRC 17206 / CCUG 44338 / CIP 107171 / LMG 19424 / R1) (Ralstonia taiwanensis (strain LMG 19424)), this protein is Ribonuclease 3.